The primary structure comprises 141 residues: Mite group 2 allergen Tyr p 2 (141 aa).

Positions 1–15 (MKFLILFALVAVAAA) are cleaved as a signal peptide. 3 disulfides stabilise this stretch: cysteine 23/cysteine 132, cysteine 36/cysteine 41, and cysteine 87/cysteine 92. Residue asparagine 103 is glycosylated (N-linked (GlcNAc...) asparagine).

The protein belongs to the NPC2 family.

It is found in the secreted. This is Mite group 2 allergen Tyr p 2 from Tyrophagus putrescentiae (Mold mite).